Consider the following 270-residue polypeptide: Ribosomal RNA small subunit methyltransferase A (270 aa).

Residues Asn-18, Leu-20, Gly-45, Glu-66, Asp-91, and Asn-112 each contribute to the S-adenosyl-L-methionine site.

Belongs to the class I-like SAM-binding methyltransferase superfamily. rRNA adenine N(6)-methyltransferase family. RsmA subfamily.

Its subcellular location is the cytoplasm. The catalysed reaction is adenosine(1518)/adenosine(1519) in 16S rRNA + 4 S-adenosyl-L-methionine = N(6)-dimethyladenosine(1518)/N(6)-dimethyladenosine(1519) in 16S rRNA + 4 S-adenosyl-L-homocysteine + 4 H(+). Functionally, specifically dimethylates two adjacent adenosines (A1518 and A1519) in the loop of a conserved hairpin near the 3'-end of 16S rRNA in the 30S particle. May play a critical role in biogenesis of 30S subunits. The polypeptide is Ribosomal RNA small subunit methyltransferase A (Shewanella piezotolerans (strain WP3 / JCM 13877)).